The chain runs to 444 residues: Putative permease IIC component YwbA (444 aa).

The 414-residue stretch at 8–421 (MEEKIMPVAG…LITCAIYYPF (414 aa)) folds into the PTS EIIC type-3 domain. A run of 10 helical transmembrane segments spans residues 31-51 (GIIL…LTSL), 72-92 (LGYP…FGIA), 104-124 (LSAG…EVPF), 138-158 (GIPI…IALF), 187-207 (FVAL…RLLI), 223-243 (LGTP…AEFV), 246-266 (LLWS…APIW), 291-311 (FFQI…VLTM), 349-371 (PLLI…IGMS), and 402-422 (SGAV…YPFF).

It is found in the cell membrane. Functionally, the phosphoenolpyruvate-dependent sugar phosphotransferase system (PTS), a major carbohydrate active -transport system, catalyzes the phosphorylation of incoming sugar substrates concomitant with their translocation across the cell membrane. The sequence is that of Putative permease IIC component YwbA (ywbA) from Bacillus subtilis (strain 168).